A 392-amino-acid chain; its full sequence is Protein FAM53C (392 aa).

Met1 carries the N-acetylmethionine modification. Residues 77–120 (HLRPPSRGSSPKEQPLSQVLRPEPPDPEKLPVPPAPPSKRHCRS) are disordered. Positions 83–93 (RGSSPKEQPLS) are enriched in polar residues. 2 positions are modified to phosphoserine: Ser122 and Ser162. Disordered regions lie at residues 141–167 (LWTPIKHRGSGGGGGPQVPHQSPPKRV), 203–303 (SRPC…LDFD), and 340–364 (SASCSPTGGSSQVLSESEEEEEGAV). A compositionally biased stretch (polar residues) spans 203–215 (SRPCATSPQSGSW). Residues Ser232, Ser234, Ser255, Ser273, and Ser299 each carry the phosphoserine modification. The segment covering 241 to 256 (ASRFLPSARSSPASSP) has biased composition (low complexity). The span at 278–303 (LDARKTGVKRRHEEDPRRLRPSLDFD) shows a compositional bias: basic and acidic residues.

It belongs to the FAM53 family.

This is Protein FAM53C from Pongo abelii (Sumatran orangutan).